The sequence spans 422 residues: MASLWVRARRVFMKSRASGFSAKAATEMGSGGAEKGYRIPAGKGPHAVGCTDLMTGDAAEGSFLRLYYLSCDDTDTEETPWIPDKEYYQGLSDFLNVYRALGERLFQYYVGSVTCPAKSNAAFKPGEKYPLLVFSHGLGAFRTIYSAICIEMASQGFLVAAVEHRDESASATYFCKKKADSEPEEDQTSGVEKEWIYYRKLRAGEEERCLRHKQVQQRAQECIKALNLILKISSGEEVMNVLNSDFDWNHLKDSVDTSRIAVMGHSFGGATVIESLSKEIRFRCGIALDAWMLPVGDDTYQSSVQQPLLFINSEKFQWAANILKMKKLSSNDTNKKMITIKGSVHQSFPDFTFVSGEIIGKFFKLKGEIDPNEAIDICNHASLAFLQKHLSLKRDFDKWDSLVDGIGPNVISGTNIDLSPTE.

Positions 1–21 are cleaved as a signal peptide; it reads MASLWVRARRVFMKSRASGFS. The Nucleophile role is filled by S266. D289 (charge relay system) is an active-site residue. N331 is a glycosylation site (N-linked (GlcNAc...) asparagine). H345 acts as the Charge relay system in catalysis.

It belongs to the AB hydrolase superfamily. Lipase family. As to expression, plasma.

The protein localises to the secreted. Its subcellular location is the extracellular space. It catalyses the reaction a 1-O-alkyl-2-acetyl-sn-glycero-3-phosphocholine + H2O = a 1-O-alkyl-sn-glycero-3-phosphocholine + acetate + H(+). Its function is as follows. Modulates the action of platelet-activating factor (PAF) by hydrolyzing the sn-2 ester bond to yield the biologically inactive lyso-PAF. Has a specificity for substrates with a short residue at the sn-2 position. It is inactive against long-chain phospholipids. The polypeptide is Platelet-activating factor acetylhydrolase (PLA2G7) (Gallus gallus (Chicken)).